A 199-amino-acid chain; its full sequence is 7-methyl-GTP pyrophosphatase (199 aa).

The active-site Proton acceptor is Asp-72.

The protein belongs to the Maf family. YceF subfamily. A divalent metal cation serves as cofactor.

It is found in the cytoplasm. It catalyses the reaction N(7)-methyl-GTP + H2O = N(7)-methyl-GMP + diphosphate + H(+). Nucleoside triphosphate pyrophosphatase that hydrolyzes 7-methyl-GTP (m(7)GTP). May have a dual role in cell division arrest and in preventing the incorporation of modified nucleotides into cellular nucleic acids. This Alkalilimnicola ehrlichii (strain ATCC BAA-1101 / DSM 17681 / MLHE-1) protein is 7-methyl-GTP pyrophosphatase.